Here is a 541-residue protein sequence, read N- to C-terminus: Membrane protein insertase YidC (541 aa).

The next 6 membrane-spanning stretches (helical) occupy residues 6-26, 325-345, 349-369, 420-440, 457-477, and 500-520; these read NILLIGLLFVSFLLWQQWQAD, LVVDYGFLWWLAVPIHWLLMF, FVGNWGVAIILITLTVRGLLF, GGCLPIILQMPIFIALYWVLL, LSVQDPYYILPLLMGVSMFIM, and VIFTVFFLWFPSGLVLYWLVG.

This sequence belongs to the OXA1/ALB3/YidC family. Type 1 subfamily. As to quaternary structure, interacts with the Sec translocase complex via SecD. Specifically interacts with transmembrane segments of nascent integral membrane proteins during membrane integration.

The protein resides in the cell inner membrane. Required for the insertion and/or proper folding and/or complex formation of integral membrane proteins into the membrane. Involved in integration of membrane proteins that insert both dependently and independently of the Sec translocase complex, as well as at least some lipoproteins. Aids folding of multispanning membrane proteins. The sequence is that of Membrane protein insertase YidC from Shewanella sp. (strain W3-18-1).